The sequence spans 674 residues: Sterile alpha motif domain-containing protein 15 (674 aa).

Residues 1–18 (MAEVPEDYDSGPDEDGEL) are compositionally biased toward acidic residues. Positions 1-448 (MAEVPEDYDS…LEHREPKRGK (448 aa)) are disordered. Basic and acidic residues-rich tracts occupy residues 87–142 (IAKE…EEAK), 195–223 (ESLR…KLGE), and 236–274 (TKPE…KSSE). Positions 276-290 (AGLEPPEETQPEVPE) are enriched in acidic residues. Composition is skewed to basic and acidic residues over residues 291 to 322 (EMQR…KSTD), 330 to 346 (EEIK…KTNE), 354 to 372 (EMMK…EKKN), and 391 to 429 (VEEK…EPIK). The SAM domain maps to 545 to 608 (WDPEEVAEWI…SRHTQELLEI (64 aa)).

This Homo sapiens (Human) protein is Sterile alpha motif domain-containing protein 15 (SAMD15).